Consider the following 312-residue polypeptide: DNA primase small subunit PriS (312 aa).

Catalysis depends on residues Asp-88, Asp-90, and Asp-215.

It belongs to the eukaryotic-type primase small subunit family. Heterodimer of a small subunit (PriS) and a large subunit (PriL). The cofactor is Mg(2+). Requires Mn(2+) as cofactor.

In terms of biological role, catalytic subunit of DNA primase, an RNA polymerase that catalyzes the synthesis of short RNA molecules used as primers for DNA polymerase during DNA replication. The small subunit contains the primase catalytic core and has DNA synthesis activity on its own. Binding to the large subunit stabilizes and modulates the activity, increasing the rate of DNA synthesis while decreasing the length of the DNA fragments, and conferring RNA synthesis capability. The DNA polymerase activity may enable DNA primase to also catalyze primer extension after primer synthesis. May also play a role in DNA repair. In Pyrobaculum islandicum (strain DSM 4184 / JCM 9189 / GEO3), this protein is DNA primase small subunit PriS.